The sequence spans 732 residues: Trehalose phosphorylase (732 aa).

Residues Met1 to Ser25 constitute a propeptide that is removed on maturation.

Belongs to the glycosyltransferase group 1 family. Glycosyltransferase 4 subfamily. In terms of assembly, homodimer.

It catalyses the reaction alpha,alpha-trehalose + phosphate = alpha-D-glucose + alpha-D-glucose 1-phosphate. Activity abolished by 1 mM Cu(2+). 0.1 mM Cu(2+) reduces trehalose phosphorolysis to 76% and trehalose synthesis to 48% of maximum activity. 1 mM Zn(2+) abolishes trehalose synthesis, and reduces trehalose phosphorolysis to 40% of maximum activity. Unaffected by EDTA. Functionally, reversibly catalyzes the synthesis and degradation of trehalose from glucose and alpha-D-glucose 1-phosphate. The equilibrium lies in the direction of trehalose synthesis. The sequence is that of Trehalose phosphorylase from Grifola frondosa (Maitake).